Reading from the N-terminus, the 545-residue chain is Cytochrome P450 10 (545 aa).

Cys-493 lines the heme pocket.

This sequence belongs to the cytochrome P450 family. The cofactor is heme. Abundantly expressed in the female gonadotropic hormone producing dorsal bodies.

May be involved in the synthesis of the female gonadotropic hormone produced by the dorsal bodies. The protein is Cytochrome P450 10 (CYP10) of Lymnaea stagnalis (Great pond snail).